The sequence spans 204 residues: UPF0215 protein MTH_1316 (204 aa).

Belongs to the UPF0215 family.

The chain is UPF0215 protein MTH_1316 from Methanothermobacter thermautotrophicus (strain ATCC 29096 / DSM 1053 / JCM 10044 / NBRC 100330 / Delta H) (Methanobacterium thermoautotrophicum).